The chain runs to 274 residues: Penicillin-insensitive murein endopeptidase (274 aa).

The N-terminal stretch at 1–19 is a signal peptide; that stretch reads MKKTAIALLAWFVSSASLA. Intrachain disulfides connect cysteine 44–cysteine 265, cysteine 187–cysteine 235, and cysteine 216–cysteine 223. Residues histidine 110, histidine 113, aspartate 120, aspartate 147, histidine 150, and histidine 211 each coordinate Zn(2+). Residues 225–274 are disordered; it reads DQPLPPPGDGCGAELQSWFEPPKPGTTKPEKKTPPPLPPSCQALLDEHVL.

It belongs to the peptidase M74 family. As to quaternary structure, dimer. It depends on Zn(2+) as a cofactor.

The protein resides in the periplasm. Murein endopeptidase that cleaves the D-alanyl-meso-2,6-diamino-pimelyl amide bond that connects peptidoglycan strands. Likely plays a role in the removal of murein from the sacculus. In Salmonella arizonae (strain ATCC BAA-731 / CDC346-86 / RSK2980), this protein is Penicillin-insensitive murein endopeptidase.